The sequence spans 349 residues: MTKLRKIIHIDMDYFFAQVEEKANPSLKDKPFAVGGTNPKRGVISTCNYIAREYGVRSAMPTAIAMQKCPNLILLNTDFAKYKAASAVIRDIFYSFTDKVEPLSLDEAYLDVTDVKEYKNSATLIAQAIKQEIFNKTGLTGSAGVAPNKLLAKIASDINKPNGLYVVTPKQVDSFVKDLPVKKLFGVGKVSQEKLKSMGVETCLDLQQLSLATLVDKFGKFGSSLYNYARGIDNREVNPVRIRKSVSVENTYLEDLKTLGACLEKLPSLYDKLTSRMTEEHYKSIIGIVVKFTDTKFNKTSLTRVAKILDKEMLKNLIIELHQKRNHPIRLIGIGVKLGEIDDKQMDLF.

The UmuC domain occupies 7 to 188 (IIHIDMDYFF…LPVKKLFGVG (182 aa)). Residues Asp-11 and Asp-106 each coordinate Mg(2+). Glu-107 is an active-site residue.

The protein belongs to the DNA polymerase type-Y family. Monomer. Mg(2+) is required as a cofactor.

The protein localises to the cytoplasm. It catalyses the reaction DNA(n) + a 2'-deoxyribonucleoside 5'-triphosphate = DNA(n+1) + diphosphate. Poorly processive, error-prone DNA polymerase involved in untargeted mutagenesis. Copies undamaged DNA at stalled replication forks, which arise in vivo from mismatched or misaligned primer ends. These misaligned primers can be extended by PolIV. Exhibits no 3'-5' exonuclease (proofreading) activity. May be involved in translesional synthesis, in conjunction with the beta clamp from PolIII. This Francisella tularensis subsp. holarctica (strain FTNF002-00 / FTA) protein is DNA polymerase IV.